A 448-amino-acid polypeptide reads, in one-letter code: MGKYFGTDGVRGVANSELTPELAFKVGRFGGYVLTKDKQRPKVLIGRDTRISGHMLEGALVAGLLSIGAEVMRLGVISTPGVSYLTKAMDAEAGVMISASHNPVQDNGIKFFGGDGFKLSDEQEAEIERLMDEPEDKLPRPVGADLGLVNDYFEGGQKYLQFLKQTADEDFTGIHVALDCANGATSSLATHLFADLDADVSTMGTSPNGLNINDGVGSTHPEALSAFVKEKNADLGLAFDGDGDRLIAVDEKGNIVDGDQIMYICSKHLKSEGRLKDDTVVSTVMSNLGFYKALEKEGIKSVQTAVGDRYVVEAMKKDGYNVGGEQSGHLIFLDYNTTGDGLLSAIMLMNTLKATGKPLSELAAEMQKFPQLLVNVRVTDKYKVEENEKVKAVISEVEKEMNGDGRILVRPSGTEPLVRVMAEAKTKELCDEYVNRIVEVVRSEMGLE.

Residue serine 100 is the Phosphoserine intermediate of the active site. 4 residues coordinate Mg(2+): serine 100, aspartate 240, aspartate 242, and aspartate 244. The residue at position 100 (serine 100) is a Phosphoserine.

Belongs to the phosphohexose mutase family. Homodimer, may form a complex with CdaA. Mg(2+) serves as cofactor. Post-translationally, activated by phosphorylation.

The catalysed reaction is alpha-D-glucosamine 1-phosphate = D-glucosamine 6-phosphate. Functionally, catalyzes the conversion of glucosamine-6-phosphate to glucosamine-1-phosphate. Glucosamine-1-phosphate is used for cell wall biosynthesis. This is Phosphoglucosamine mutase from Bacillus subtilis (strain 168).